The primary structure comprises 326 residues: Polycomb complex protein BMI-1-A (326 aa).

The RING-type zinc-finger motif lies at 18–57; the sequence is CVLCGGYFIDATTIIECLHSFCKTCIVRYLETSKYCPICD. Residues 81–95 carry the Nuclear localization signal motif; sequence KLVPGLFKGEMKRRR. Disordered stretches follow at residues 239–262 and 274–326; these read NPHT…DKAG and CIPS…ISSG. Positions 290–303 are enriched in low complexity; the sequence is ISSTINGTSSSSSS.

As to quaternary structure, component of a PRC1-like complex. Interacts with cbx4.

It localises to the nucleus. Functionally, component of a Polycomb group (PcG) multiprotein PRC1-like complex, a complex class required to maintain the transcriptionally repressive state of many genes, including Hox genes, throughout development. PcG PRC1 complex acts via chromatin remodeling and modification of histones; it mediates monoubiquitination of histone H2A 'Lys-119', rendering chromatin heritably changed in its expressibility. In the PRC1 complex, it is required to stimulate the E3 ubiquitin-protein ligase activity of rnf2. This Xenopus laevis (African clawed frog) protein is Polycomb complex protein BMI-1-A (bmi1a).